Reading from the N-terminus, the 318-residue chain is Probable arabinan endo-1,5-alpha-L-arabinosidase C (318 aa).

Residues 1–28 (MLSFVLLLCVALVNAYSDPGACSGTCWA) form the signal peptide. Catalysis depends on D30, which acts as the Proton acceptor. N-linked (GlcNAc...) asparagine glycans are attached at residues N72, N80, and N188. Catalysis depends on E196, which acts as the Proton donor. An N-linked (GlcNAc...) asparagine glycan is attached at N277.

Belongs to the glycosyl hydrolase 43 family.

Its subcellular location is the secreted. The enzyme catalyses Endohydrolysis of (1-&gt;5)-alpha-arabinofuranosidic linkages in (1-&gt;5)-arabinans.. The protein operates within glycan metabolism; L-arabinan degradation. Endo-1,5-alpha-L-arabinanase involved in degradation of pectin. Its preferred substrate is linear 1,5-alpha-L-arabinan. This is Probable arabinan endo-1,5-alpha-L-arabinosidase C (abnC) from Aspergillus niger (strain ATCC MYA-4892 / CBS 513.88 / FGSC A1513).